The chain runs to 21 residues: Venom peptide Tv1 (21 aa).

3 disulfide bridges follow: Cys-4–Cys-20, Cys-5–Cys-21, and Cys-7–Cys-16.

As to expression, expressed by the salivary gland. This peptide is considered as a venom peptide.

Its subcellular location is the secreted. Functionally, injections of 20 uM of this synthetic peptide (Ile) causes partial paralysis to polychaete worms (Nereis virens), the natural prey of terebrid snails. This paralysis may be due to an inhibition of nicotinic receptors at the neuromuscular junction. The chain is Venom peptide Tv1 from Terebra variegata (Variegate auger snail).